A 317-amino-acid chain; its full sequence is Orange carotenoid-binding protein (317 aa).

Positions 18–169 (ADVVPATIAR…DMGFDTSKLG (152 aa)) constitute an OCP N-terminal domain. Leu-37, Tyr-203, and Trp-290 together coordinate 3'-hydroxyechinenone.

This sequence belongs to the orange carotenoid-binding protein family. Homodimer. 3'-hydroxyechinenone is required as a cofactor. In terms of processing, proteolytically cleaved into a red 16.7 kDa form named red carotenoid-binding protein (RCP) which lacks 15 residues from the N-terminus and approximately 150 residues from the C-terminus.

Its subcellular location is the cellular thylakoid membrane. Acts as a blue-light photoreceptor and photo-protectant. Essential for inhibiting damaged induced by excess blue-green light via a process known as non-photochemical quenching (NPQ). Binding carotenoids improves OCP's intrinsic photoprotectant activity by broadening its absorption spectrum and facilitating the dissipation of absorbed energy. In the dark or dim light the stable inactive form (OCP-O) is orange, upon illumination with blue-green light it converts to a metastable active red form (OCP-R), inducing energy dissipation, quenching cellular fluorescence via NPQ. The chain is Orange carotenoid-binding protein from Limnospira maxima (Arthrospira maxima).